Here is a 332-residue protein sequence, read N- to C-terminus: Ferrochelatase (332 aa).

Histidine 201 and glutamate 283 together coordinate Fe cation.

Belongs to the ferrochelatase family.

The protein resides in the cytoplasm. It carries out the reaction heme b + 2 H(+) = protoporphyrin IX + Fe(2+). The protein operates within porphyrin-containing compound metabolism; protoheme biosynthesis; protoheme from protoporphyrin-IX: step 1/1. Catalyzes the ferrous insertion into protoporphyrin IX. This chain is Ferrochelatase, found in Francisella tularensis subsp. holarctica (strain FTNF002-00 / FTA).